The chain runs to 236 residues: (5-formylfuran-3-yl)methyl phosphate synthase (236 aa).

The Schiff-base intermediate with substrate role is filled by Lys-27. Residue Lys-85 is the Proton acceptor of the active site.

This sequence belongs to the MfnB family.

The enzyme catalyses 2 D-glyceraldehyde 3-phosphate = 4-(hydroxymethyl)-2-furancarboxaldehyde phosphate + phosphate + 2 H2O. It functions in the pathway cofactor biosynthesis; methanofuran biosynthesis. Functionally, catalyzes the formation of 4-(hydroxymethyl)-2-furancarboxaldehyde phosphate (4-HFC-P) from two molecules of glyceraldehyde-3-P (GA-3-P). The protein is (5-formylfuran-3-yl)methyl phosphate synthase of Methanococcus maripaludis (strain C5 / ATCC BAA-1333).